A 515-amino-acid chain; its full sequence is Hopanoid C-3 methylase (515 aa).

The B12-binding domain occupies 8 to 141 (PSPLMYTKVF…ETLARRGNID (134 aa)). A Radical SAM core domain is found at 181-395 (GTLDPCASIE…DIQHAVLPTR (215 aa)). Cys-195, Cys-199, and Cys-202 together coordinate [4Fe-4S] cluster.

The protein belongs to the radical SAM superfamily. [4Fe-4S] cluster serves as cofactor.

In terms of biological role, required for methylation of hopanoids at the C-3 position. This is Hopanoid C-3 methylase from Methylococcus capsulatus (strain ATCC 33009 / NCIMB 11132 / Bath).